The primary structure comprises 309 residues: Homoserine kinase (309 aa).

Residue 91 to 101 (PVGSGLGSSAC) coordinates ATP.

This sequence belongs to the GHMP kinase family. Homoserine kinase subfamily.

Its subcellular location is the cytoplasm. It carries out the reaction L-homoserine + ATP = O-phospho-L-homoserine + ADP + H(+). It participates in amino-acid biosynthesis; L-threonine biosynthesis; L-threonine from L-aspartate: step 4/5. Its function is as follows. Catalyzes the ATP-dependent phosphorylation of L-homoserine to L-homoserine phosphate. The polypeptide is Homoserine kinase (Hamiltonella defensa subsp. Acyrthosiphon pisum (strain 5AT)).